Consider the following 317-residue polypeptide: Transaldolase A (317 aa).

The active-site Schiff-base intermediate with substrate is the lysine 132.

It belongs to the transaldolase family. Type 1 subfamily. Homodimer.

The protein resides in the cytoplasm. The catalysed reaction is D-sedoheptulose 7-phosphate + D-glyceraldehyde 3-phosphate = D-erythrose 4-phosphate + beta-D-fructose 6-phosphate. Its pathway is carbohydrate degradation; pentose phosphate pathway; D-glyceraldehyde 3-phosphate and beta-D-fructose 6-phosphate from D-ribose 5-phosphate and D-xylulose 5-phosphate (non-oxidative stage): step 2/3. Transaldolase is important for the balance of metabolites in the pentose-phosphate pathway. The protein is Transaldolase A (talA) of Pasteurella multocida (strain Pm70).